We begin with the raw amino-acid sequence, 277 residues long: Small ribosomal subunit protein uS2 (277 aa).

The interval 247-277 (LSAFESSQDDESDEENREEDLLAKKFDGEAN) is disordered. The segment covering 253–264 (SQDDESDEENRE) has biased composition (acidic residues). Positions 265–277 (EDLLAKKFDGEAN) are enriched in basic and acidic residues.

This sequence belongs to the universal ribosomal protein uS2 family.

The protein is Small ribosomal subunit protein uS2 (rpsB) of Chlamydia pneumoniae (Chlamydophila pneumoniae).